The sequence spans 168 residues: Protein C2-DOMAIN ABA-RELATED 3 (168 aa).

Residues 1-106 enclose the C2 domain; the sequence is MSLMDNLLGI…IEALRMELSG (106 aa). Positions 24, 25, 30, 76, 77, 78, and 84 each coordinate Ca(2+).

It belongs to the plant CAR protein family. In terms of assembly, binds to PYR/PYL/RCAR abscisic acid intracellular receptors in an ABA-independent manner, both at the plasma membrane and in the nucleus. The cofactor is Ca(2+).

It localises to the cell membrane. It is found in the nucleus. Its function is as follows. Stimulates the GTPase/ATPase activities of Obg-like ATPases. Mediates the transient calcium-dependent interaction of PYR/PYL/RCAR abscisic acid (ABA) receptors with the plasma membrane and thus regulates ABA sensitivity. This Arabidopsis thaliana (Mouse-ear cress) protein is Protein C2-DOMAIN ABA-RELATED 3.